The chain runs to 406 residues: Tyrosine--tRNA ligase (406 aa).

Tyr34 contacts L-tyrosine. Residues 39–48 (PTADSLHVGH) carry the 'HIGH' region motif. L-tyrosine is bound by residues Tyr167 and Gln171. Positions 227–231 (KMGKT) match the 'KMSKS' region motif. ATP is bound at residue Lys230. An S4 RNA-binding domain is found at 339–404 (RKIVDVLFEA…GKKEYHRLLV (66 aa)).

The protein belongs to the class-I aminoacyl-tRNA synthetase family. TyrS type 1 subfamily. In terms of assembly, homodimer.

The protein localises to the cytoplasm. The enzyme catalyses tRNA(Tyr) + L-tyrosine + ATP = L-tyrosyl-tRNA(Tyr) + AMP + diphosphate + H(+). In terms of biological role, catalyzes the attachment of tyrosine to tRNA(Tyr) in a two-step reaction: tyrosine is first activated by ATP to form Tyr-AMP and then transferred to the acceptor end of tRNA(Tyr). This is Tyrosine--tRNA ligase from Caldanaerobacter subterraneus subsp. tengcongensis (strain DSM 15242 / JCM 11007 / NBRC 100824 / MB4) (Thermoanaerobacter tengcongensis).